The following is a 2345-amino-acid chain: Acetyl-CoA carboxylase 1 (2345 aa).

Methionine 1 bears the N-acetylmethionine mark. A phosphoserine mark is found at serine 5, serine 23, serine 25, serine 29, serine 34, serine 47, serine 49, and serine 52. Threonine 57 bears the Phosphothreonine mark. 2 positions are modified to phosphoserine: serine 77 and serine 79. Position 79 is a phosphoserine; by AMPK (serine 79). Residues 116–617 form the Biotin carboxylation domain; sequence VIEKVLIANN…DTGWLDRLIA (502 aa). The ATP-grasp domain maps to 274-465; that stretch reads SKRILNVPQD…LPAAQLQIAM (192 aa). 300–357 lines the ATP pocket; sequence AEEVGYPVMIKASEGGGGKGIRKVNNADDFPNLFRQVQAEVPGSPIFVMRLAKQSRHL. Residues glutamate 423, glutamate 436, and asparagine 438 each contribute to the Mg(2+) site. Residues glutamate 423, glutamate 436, and asparagine 438 each coordinate Mn(2+). Arginine 440 is an active-site residue. Threonine 609 is modified (phosphothreonine). A Biotinyl-binding domain is found at 744 to 818; it reads FEKENDPSVM…DPGCVIAKMQ (75 aa). Lysine 785 is subject to N6-biotinyllysine. Phosphoserine is present on residues serine 834, serine 1200, serine 1215, and serine 1217. A Phosphothreonine modification is found at threonine 1226. Residues serine 1258, serine 1262, and serine 1272 each carry the phosphoserine modification. Lysine 1333 bears the N6-acetyllysine mark. The region spanning 1575-1913 is the CoA carboxyltransferase N-terminal domain; it reads PYVTKDLLQS…SVHSSVPLLN (339 aa). The interval 1575-2233 is carboxyltransferase; sequence PYVTKDLLQS…EDLVKKKIHN (659 aa). The CoA site is built by arginine 1822, lysine 2126, and arginine 2128. The region spanning 1917–2233 is the CoA carboxyltransferase C-terminal domain; that stretch reads PIDRIIEFVP…EDLVKKKIHN (317 aa). Threonine 2152 bears the Phosphothreonine mark.

Monomer, homodimer, and homotetramer. Can form filamentous polymers. Interacts in its inactive phosphorylated form with the BRCT domains of BRCA1 which prevents ACACA dephosphorylation and inhibits lipid synthesis. Interacts with MID1IP1; interaction with MID1IP1 promotes oligomerization and increases its activity. Mg(2+) is required as a cofactor. It depends on Mn(2+) as a cofactor. Requires biotin as cofactor. Post-translationally, phosphorylation on Ser-1262 is required for interaction with BRCA1. In terms of processing, phosphorylation at Ser-79 by AMPK inactivates enzyme activity. The biotin cofactor is covalently attached to the central biotinyl-binding domain and is required for the catalytic activity.

Its subcellular location is the cytoplasm. It is found in the cytosol. The enzyme catalyses hydrogencarbonate + acetyl-CoA + ATP = malonyl-CoA + ADP + phosphate + H(+). Its pathway is lipid metabolism; malonyl-CoA biosynthesis; malonyl-CoA from acetyl-CoA: step 1/1. Its activity is regulated as follows. Inhibited by phosphorylation. Citrate promotes oligomerization of the protein into filaments that correspond to the most active form of the carboxylase. Cytosolic enzyme that catalyzes the carboxylation of acetyl-CoA to malonyl-CoA, the first and rate-limiting step of de novo fatty acid biosynthesis. This is a 2 steps reaction starting with the ATP-dependent carboxylation of the biotin carried by the biotin carboxyl carrier (BCC) domain followed by the transfer of the carboxyl group from carboxylated biotin to acetyl-CoA. The protein is Acetyl-CoA carboxylase 1 of Mus musculus (Mouse).